Reading from the N-terminus, the 112-residue chain is Large ribosomal subunit protein eL30 (112 aa).

This sequence belongs to the eukaryotic ribosomal protein eL30 family.

This is Large ribosomal subunit protein eL30 (rpl30) from Dictyostelium discoideum (Social amoeba).